A 334-amino-acid polypeptide reads, in one-letter code: N-acetyl-gamma-glutamyl-phosphate reductase (334 aa).

Cys-154 is an active-site residue.

It belongs to the NAGSA dehydrogenase family. Type 1 subfamily.

The protein resides in the cytoplasm. The enzyme catalyses N-acetyl-L-glutamate 5-semialdehyde + phosphate + NADP(+) = N-acetyl-L-glutamyl 5-phosphate + NADPH + H(+). It participates in amino-acid biosynthesis; L-arginine biosynthesis; N(2)-acetyl-L-ornithine from L-glutamate: step 3/4. Functionally, catalyzes the NADPH-dependent reduction of N-acetyl-5-glutamyl phosphate to yield N-acetyl-L-glutamate 5-semialdehyde. This is N-acetyl-gamma-glutamyl-phosphate reductase from Escherichia coli (strain K12).